The primary structure comprises 1025 residues: MAPVLSKDVADIESILALNPRTQSRATLRSTLAKKLDKKHWKRNPDKNCFNCEKLENNFDDIKHTTLGERGALREAMRCLKCADAPCQKSCPTNLDIKSFITSISNKNYYGAAKMIFSDNPLGLTCGMVCPTSDLCVGGCNLYATEEGPINIGGLQQYATEVFKAMNIPQIRNPSLPPPEKMPEAYSAKIALLGAGPASISCASFLARLGYNDITIFEKQEYVGGISTSEIPQFRLPYDVVNFEIELMKDLGVKIICGKSLSVNDITLSTLKEEGYKAAFIGIGLPEPKKDHIFQGLTQDQGFYTSKDFLPLVAKSSKAGMCACHSPLLSIRGTVIVLGAGDTAFDCATSALRCGARRVFIVFRKGFVNIRAVPEEVELAREEKCEFLPFLSPRKVIVKGGRIVAMQFVRTEQDETGKWNEDGDQIACLKADVVISAFGSVLSDPKVKEALSPIKFNRWDLPEVDPETMQTSEPWVFAGGDVVGIANTTVEAVNDGKQASWYIHRYIQSQYGASVSAKPELPLFYTPIDLVDISVEMAALKFTNPFGLASATPTTSSSMIRRAFEAGWAFALTKTFSLDKDIVTNVSPRIIRGTTSGPMYGPGQSSFLNIELISEKTAAYWCQSVTELKADFPDNIVIASIMCSYNRNDWMELSRKAEASGADALELNLSCPHGMGERGMGLACGQDPELVRNICRWVRQAVRIPFFAKLTPNVTDIVSIARAAKEGGANGVTATNTVSGLMGLKADGTPWPAVGREKRTTYGGVSGTAIRPIALRAVTTIARALPEFPILATGGIDSAESGLQFLHGGASVLQVCSAIQNQDFTIIQDYCTGLKALLYLKSIEELQDWDGQSPATKSHQKGKPVPCIAELVGKKLPSFGPYLEKCKKIIAEEKLRLKKENVTVLPLERNHFIPKKPIPSVKDVIGKALQYLGTYGELNNTEQVVAVIDEEMCINCGKCYMTCNDSGYQAIQFDPETHLPTVTDTCTGCTLCLSVCPIIDCIKMVSRTTPYEPKRGLPLAVNPVS.

The 32-residue stretch at 69–100 (ERGALREAMRCLKCADAPCQKSCPTNLDIKSF) folds into the 4Fe-4S ferredoxin-type 1 domain. 4 residues coordinate [4Fe-4S] cluster: C79, C82, C87, and C91. Residue V129 participates in FAD binding. 4 residues coordinate [4Fe-4S] cluster: C130, C136, C140, and Q156. FAD-binding positions include 194 to 198 (GAGPA), 218 to 226 (EKQEYVGGI), R235, and L261. NADP(+) contacts are provided by residues 340–343 (AGDT), 364–365 (RK), and R371. K384 carries the N6-acetyllysine modification. Residues 437–439 (AFG) and 481–487 (DVVGIAN) each bind NADP(+). 480–489 (GDVVGIANTT) contacts FAD. FMN-binding positions include S550 and 574 to 575 (KT). Residues N609 and 668–670 (NLS) each bind substrate. C671 acts as the Proton acceptor in catalysis. K709 provides a ligand contact to FMN. 736 to 737 (NT) is a substrate binding site. Residues G767, 793–795 (TGG), and 816–817 (CS) contribute to the FMN site. 4Fe-4S ferredoxin-type domains follow at residues 944 to 976 (VVAV…FDPE) and 978 to 1007 (HLPT…MVSR). [4Fe-4S] cluster is bound by residues C953, C956, C959, C963, C986, C989, C992, and C996.

It belongs to the dihydropyrimidine dehydrogenase family. As to quaternary structure, homodimer. It depends on FAD as a cofactor. FMN serves as cofactor. The cofactor is [4Fe-4S] cluster.

It localises to the cytoplasm. The catalysed reaction is 5,6-dihydrouracil + NADP(+) = uracil + NADPH + H(+). It catalyses the reaction 5,6-dihydrothymine + NADP(+) = thymine + NADPH + H(+). Its pathway is amino-acid biosynthesis; beta-alanine biosynthesis. With respect to regulation, inactivated by 5-iodouracil. In terms of biological role, involved in pyrimidine base degradation. Catalyzes the reduction of uracil and thymine. Also involved the degradation of the chemotherapeutic drug 5-fluorouracil. The chain is Dihydropyrimidine dehydrogenase [NADP(+)] (DPYD) from Bos taurus (Bovine).